The following is a 498-amino-acid chain: Probable deoxyguanosinetriphosphate triphosphohydrolase (498 aa).

In terms of domain architecture, HD spans 71–262 (RLTHSLEVQQ…MEAADDISYC (192 aa)).

The protein belongs to the dGTPase family. Type 1 subfamily. Requires Mg(2+) as cofactor.

The catalysed reaction is dGTP + H2O = 2'-deoxyguanosine + triphosphate + H(+). In terms of biological role, dGTPase preferentially hydrolyzes dGTP over the other canonical NTPs. In Pseudomonas aeruginosa (strain ATCC 15692 / DSM 22644 / CIP 104116 / JCM 14847 / LMG 12228 / 1C / PRS 101 / PAO1), this protein is Probable deoxyguanosinetriphosphate triphosphohydrolase.